The primary structure comprises 238 residues: Ribitol-5-phosphate cytidylyltransferase 1 (238 aa).

CTP-binding positions include 7–10 (LAGG) and 81–87 (GSDRNDT).

The protein belongs to the IspD/TarI cytidylyltransferase family. TarI subfamily.

It catalyses the reaction D-ribitol 5-phosphate + CTP + H(+) = CDP-L-ribitol + diphosphate. It functions in the pathway cell wall biogenesis; poly(ribitol phosphate) teichoic acid biosynthesis. In terms of biological role, catalyzes the transfer of the cytidylyl group of CTP to D-ribitol 5-phosphate. In Staphylococcus aureus (strain USA300), this protein is Ribitol-5-phosphate cytidylyltransferase 1.